Here is a 121-residue protein sequence, read N- to C-terminus: UPF0344 protein BT9727_1053 (121 aa).

Transmembrane regions (helical) follow at residues 6-26 (ITAWALGLILFFVAYSLYSAG), 38-58 (LMYIIIIVTGFMLYMGIMKTA), 65-85 (WYGLKMIAGILVIGGMEMVLV), and 92-112 (ATGAVWGLFIVALVAVFYLGL).

This sequence belongs to the UPF0344 family.

The protein resides in the cell membrane. In Bacillus thuringiensis subsp. konkukian (strain 97-27), this protein is UPF0344 protein BT9727_1053.